A 453-amino-acid polypeptide reads, in one-letter code: MADRQHFPSAITEAVSSNTACPDTGPKAETTNIFLLLQRNITIESSKHVFSSIVEYILILTLMFAFSAILYVIYKSYISPVFYKKELTEVGFDHIPQGPDKGRRISRAQASRRMGSKLPPPYPNGWFAVAETRELKVGSVLSIDALGQNLCVYRGEDGLARCVDAYCPHLGANLAVGGTVRGSCIECPFHKWRFNAAGTCVSLPGSDIAPKGVSIRTWCVVETDGAIWIWHDAEGREPLWEITDPPELKDFGYRGRNEFEVSAHIQEIPENGADVPHLNAVHSSSLLSDLGERYPVLHEIIGRHVWNADWTKSDDHTSLMHITQEYKVLKYDLARIDVKVTQIGPGHVRLFLKTSVGPFYIAQSVTPLGPLLQKVIHRVYSPAYNAPVGAFLVRCEAYMFERDVTIWNSKRFVSAPAYVKTDKTIRTFRNWFGQFYSEHSLSFRDALQNPLDW.

A helical membrane pass occupies residues I53–I73. The Rieske domain occupies W126–I229. [2Fe-2S] cluster-binding residues include C167, H169, C187, and H190.

Belongs to the cholesterol 7-desaturase family. It depends on [2Fe-2S] cluster as a cofactor.

The protein localises to the membrane. The catalysed reaction is cholesterol + NADPH + O2 + H(+) = 7-dehydrocholesterol + NADP(+) + 2 H2O. The enzyme catalyses cholesterol + NADH + O2 + H(+) = 7-dehydrocholesterol + NAD(+) + 2 H2O. The protein operates within steroid hormone biosynthesis; dafachronic acid biosynthesis. Catalyzes the production of 7-dehydrocholesterol (7-DHC or cholesta-5,7-dien-3beta-ol) by inserting a double bond (desaturating) at the C7-C8 single bond of cholesterol. Essential regulator of steroid biosynthesis as this reaction is the first step in the synthesis of the steroid hormone Delta(7)-dafachronic acid. This Bombyx mori (Silk moth) protein is Cholesterol 7-desaturase nvd.